The chain runs to 732 residues: Sesterbrasiliatriene synthase PbSS (732 aa).

The segment at 1 to 342 (MDFLSGAFHY…SRYHRDDLIT (342 aa)) is terpene cyclase. Asp105 and Asp109 together coordinate Mg(2+). Residues Asp105, Asp109, 193–196 (RLSE), 242–246 (FNKEF), and 334–335 (RY) each bind substrate. Residues 105–109 (DDVTD) carry the DDXXD 1 motif. Positions 238–246 (DYYSFNKEF) match the NSE/DTE motif. Positions 343-732 (TAGDRAMIVG…ARILLLGLGL (390 aa)) are prenyltransferase. Disordered stretches follow at residues 371–390 (KSATSSNDISGRKRKSWSDS) and 398–420 (ACYTNGSSNRAKRNGTEAGHKAN). Basic and acidic residues predominate over residues 411–420 (NGTEAGHKAN). Residues Lys453, Arg456, and His485 each coordinate isopentenyl diphosphate. 2 residues coordinate Mg(2+): Asp492 and Asp496. The short motif at 492–496 (DDIED) is the DDXXD 2 element. Arg501 is a dimethylallyl diphosphate binding site. Arg502 is an isopentenyl diphosphate binding site. Dimethylallyl diphosphate contacts are provided by Lys579, Thr580, Gln615, Asn622, Lys632, and Lys642.

In the N-terminal section; belongs to the terpene synthase family. It in the C-terminal section; belongs to the FPP/GGPP synthase family. Hexamer. Mg(2+) is required as a cofactor.

It catalyses the reaction isopentenyl diphosphate + (2E,6E)-farnesyl diphosphate = (2E,6E,10E)-geranylgeranyl diphosphate + diphosphate. The catalysed reaction is isopentenyl diphosphate + (2E,6E,10E)-geranylgeranyl diphosphate = (2E,6E,10E,14E)-geranylfarnesyl diphosphate + diphosphate. It functions in the pathway secondary metabolite biosynthesis; terpenoid biosynthesis. Bifunctional sesterterpene synthase that possesses both prenyl transferase and terpene cyclase activity, converting isopentenyl diphosphate and dimethylallyl diphosphate into geranylfarnesyl diphosphate (GFPP) and further converting GFPP into sesterbrasiliatriene. This is Sesterbrasiliatriene synthase PbSS (PbSS) from Penicillium brasilianum.